Consider the following 242-residue polypeptide: Phosphoribosylaminoimidazole-succinocarboxamide synthase (242 aa).

The protein belongs to the SAICAR synthetase family.

The enzyme catalyses 5-amino-1-(5-phospho-D-ribosyl)imidazole-4-carboxylate + L-aspartate + ATP = (2S)-2-[5-amino-1-(5-phospho-beta-D-ribosyl)imidazole-4-carboxamido]succinate + ADP + phosphate + 2 H(+). Its pathway is purine metabolism; IMP biosynthesis via de novo pathway; 5-amino-1-(5-phospho-D-ribosyl)imidazole-4-carboxamide from 5-amino-1-(5-phospho-D-ribosyl)imidazole-4-carboxylate: step 1/2. The polypeptide is Phosphoribosylaminoimidazole-succinocarboxamide synthase (Magnetococcus marinus (strain ATCC BAA-1437 / JCM 17883 / MC-1)).